Consider the following 1003-residue polypeptide: Trifunctional purine biosynthetic protein adenosine-3 (1003 aa).

Residues 111–318 (KSFLDRHGIP…LYEVMQAVIN (208 aa)) enclose the ATP-grasp domain. ATP-binding positions include 190-193 (EELL), E197, R220, and N229. The tract at residues 214-235 (PAQDHKRLKDGDEGPNTGGMGA) is disordered. Basic and acidic residues predominate over residues 216–225 (QDHKRLKDGD). Mg(2+) contacts are provided by E288 and N290. The AIRS domain stretch occupies residues 434–805 (GLTYKNSGVD…QGKIQTNKVK (372 aa)). The segment at 806–1003 (VAVLISGTGT…VGEAGKICWK (198 aa)) is GART domain. Position 814-816 (814-816 (GTN)) interacts with N(1)-(5-phospho-beta-D-ribosyl)glycinamide. Residues R867, 892–895 (MRIL), and N909 contribute to the (6R)-10-formyltetrahydrofolate site. Catalysis depends on H911, which acts as the Proton donor. (6R)-10-formyltetrahydrofolate is bound at residue 943–947 (AEEVD). Position 973 to 976 (973 to 976 (KEAE)) interacts with N(1)-(5-phospho-beta-D-ribosyl)glycinamide.

This sequence in the N-terminal section; belongs to the GARS family. In the central section; belongs to the AIR synthase family. It in the C-terminal section; belongs to the GART family. In terms of assembly, homodimer. Mg(2+) is required as a cofactor. The cofactor is Mn(2+).

It catalyses the reaction 5-phospho-beta-D-ribosylamine + glycine + ATP = N(1)-(5-phospho-beta-D-ribosyl)glycinamide + ADP + phosphate + H(+). The enzyme catalyses 2-formamido-N(1)-(5-O-phospho-beta-D-ribosyl)acetamidine + ATP = 5-amino-1-(5-phospho-beta-D-ribosyl)imidazole + ADP + phosphate + H(+). It carries out the reaction N(1)-(5-phospho-beta-D-ribosyl)glycinamide + (6R)-10-formyltetrahydrofolate = N(2)-formyl-N(1)-(5-phospho-beta-D-ribosyl)glycinamide + (6S)-5,6,7,8-tetrahydrofolate + H(+). Its pathway is purine metabolism; IMP biosynthesis via de novo pathway; 5-amino-1-(5-phospho-D-ribosyl)imidazole from N(2)-formyl-N(1)-(5-phospho-D-ribosyl)glycinamide: step 2/2. The protein operates within purine metabolism; IMP biosynthesis via de novo pathway; N(1)-(5-phospho-D-ribosyl)glycinamide from 5-phospho-alpha-D-ribose 1-diphosphate: step 2/2. It participates in purine metabolism; IMP biosynthesis via de novo pathway; N(2)-formyl-N(1)-(5-phospho-D-ribosyl)glycinamide from N(1)-(5-phospho-D-ribosyl)glycinamide (10-formyl THF route): step 1/1. Its function is as follows. Trifunctional enzyme that catalyzes three distinct reactions as part of the 'de novo' inosine monophosphate biosynthetic pathway. The polypeptide is Trifunctional purine biosynthetic protein adenosine-3 (GART) (Gallus gallus (Chicken)).